Here is a 562-residue protein sequence, read N- to C-terminus: MFKNPNIRYHKLSSKSNDNDQESSHRCKHILLFIITLFLLIVGLYIANSLAYARFASTSTGPIAAPDVTKCGQPDLPPGTAPINCCPPIPAKIIDFELPPPSTTMRVRRAAHLVDDAYIAKFKKAVELMRALPEDDPRSFKQQANVHCAYCAGAYNQAGFTNLKLQIHRSWLFFPFHRYYIYFFERILGKLINDTTFALPFWNYDSPGGMTIPSMFIDTNSSLYDSLRDSNHQPPTIVDLNYAFSDSDNTTTPEEQMIINLKIVYRQMVSSAKTPQLFFGRPYRRGDQEFPGVGSIELVPHGMIHLWTGSENTPYGENMGAFYSTARDPIFFAHHSNVDRMWSIWKTLGGPRRTDLTDPDFLDASFVFYDENAEMVRVKVRDCLDEKKLGYVYQDVEIPWLNTRPTPKVSPSLLKKFHRTNTANPRQVFPAILDRVLKVIVTRPKKTRSRKEKDELEEILVIEGIELERDHGHVKFDVYINADEDDLAVISPENAEFAGSFVSLWHKPIKGKRTKTQLLTLSICDILEDLDADEDDYVLVTLVPRNAGDAIKIHNVKIELDG.

Intrachain disulfides connect Cys71/Cys86 and Cys85/Cys148. Cu cation contacts are provided by His147, His168, His177, His301, His305, and His335. A cross-link (2'-(S-cysteinyl)-histidine (Cys-His)) is located at residues 151–168 (CAGAYNQAGFTNLKLQIH).

The protein belongs to the tyrosinase family. In terms of assembly, monomer. The cofactor is Cu(2+). In terms of processing, glycosylated. Contains probably N- and C-terminal propeptides. As to expression, expressed in petals. Not detected in stems and leaves.

Its subcellular location is the vacuole lumen. It carries out the reaction 2',4,4',6'-tetrahydroxychalcone 4'-O-beta-D-glucoside + O2 = aureusidin 6-O-beta-glucoside + H2O. It catalyses the reaction 2 2',3,4,4',6'-pentahydroxychalcone 4'-O-beta-D-glucoside + O2 + 2 H(+) = 2 aureusidin 6-O-beta-glucoside + 2 H2O. The catalysed reaction is 2',3,4,4',6'-pentahydroxychalcone 4'-O-beta-D-glucoside + O2 + H(+) = bracteatin 6-O-beta-glucoside + H2O. H(2)O(2) activates the 3-hydroxylation and oxidative cyclization of tetrahydroxychalcone but inhibits reaction with pentahydroxychalcone. Inhibited by phenylthiourea. Its function is as follows. Involved in the biosynthesis of aurones, plant flavonoids that provide yellow coloration to flowers. Can use tetrahydroxychalcone (THC), pentahydroxychalcone (PHC), THC 4'-glucoside and PHC 4'-glucoside as substrates, but not 2'-hydroxychalcone, 4-hydroxychalcone, PHC 3-glucoside, 2',6'-dihydroxy-4,4'-dimethoxychalcone, naringenin, eriodictyol and 4,4',6-trihydroxyaurone. Can also produce bracteatin from PHC. The protein is Aureusidin synthase (AS1) of Antirrhinum majus (Garden snapdragon).